Consider the following 583-residue polypeptide: AP-1-like transcription factor YAP1 (583 aa).

Residues 1–86 (MSTSTAKRPF…KELEDKVSQL (86 aa)) are disordered. The segment covering 8 to 17 (RPFDNKRAGS) has biased composition (basic and acidic residues). Low complexity predominate over residues 24–36 (SDSGGNNSGSSPA). A compositionally biased stretch (basic residues) spans 37 to 46 (SKRRERKPGR). The Bipartite nuclear localization signal motif lies at 41-48 (ERKPGRKP). Composition is skewed to basic and acidic residues over residues 47 to 58 (KPLETEAKDKRT) and 67 to 84 (AFRE…DKVS). The bZIP domain occupies 51–114 (TEAKDKRTAQ…TNLLSELKRY (64 aa)). The segment at 54–77 (KDKRTAQNRAAQRAFRERRERKMK) is basic motif. A leucine-zipper region spans residues 79 to 86 (LEDKVSQL). The Bipartite nuclear localization signal motif lies at 120-127 (KKRDSILL). Positions 177 to 195 (SKIPSPSSDSTSPSASTSI) are enriched in low complexity. Residues 177-233 (SKIPSPSSDSTSPSASTSILDNANNKSVSSTNLNHSRSSISNSSSSPSNVNGLSSRK) are disordered. A compositionally biased stretch (polar residues) spans 196–207 (LDNANNKSVSST). Residues 208 to 230 (NLNHSRSSISNSSSSPSNVNGLS) are compositionally biased toward low complexity. The n-CRD stretch occupies residues 265 to 272 (CSKLSMAC). 2 cysteine pairs are disulfide-bonded: Cys-265–Cys-531 and Cys-272–Cys-562. Disordered regions lie at residues 275–329 (KSNP…SASA) and 350–373 (QYND…VSAW). The span at 297–312 (KSNSNVNITNHNNNKI) shows a compositional bias: low complexity. A compositionally biased stretch (polar residues) spans 316-329 (DLSSSAPLHDSASA). A c-CRD region spans residues 531–562 (CSEVWDRITAHPRYSDLDIDGLCLELRTKAKC). The Nuclear export signal motif lies at 547-554 (LDIDGLCL).

This sequence belongs to the bZIP family. YAP subfamily. Oxidative stress induces conformational changes through oxidation of cysteine residues, masking the nuclear export signal, thus abolishing nuclear export by CRM1/exportin 1.

Its subcellular location is the nucleus. It is found in the cytoplasm. Functionally, transcription activator involved in oxidative stress response and cadmium resistance. Regulates the transcription of genes encoding antioxidant enzymes and components of the cellular thiol-reducing pathways. Activity of the transcription factor is controlled through oxidation of specific cysteine residues resulting in the alteration of its subcellular location. Activation by alkyl hydroperoxides or cadmium induces nuclear accumulation and as a result YAP1 transcriptional activity. The chain is AP-1-like transcription factor YAP1 (YAP1) from Kluyveromyces lactis (strain ATCC 8585 / CBS 2359 / DSM 70799 / NBRC 1267 / NRRL Y-1140 / WM37) (Yeast).